A 522-amino-acid chain; its full sequence is MKKIMLIASAMSALSLPFSASAIELGDEGVLECGPYAKIGVVGGMVTGVESARLDPADVDCKKHLSLTTMLPFGGTLAAGMTIAPGFRAELGVMYLRNINAEVELGEGKTGSGAANAAIDTGAPIRKRFKLTPPQPTIMPISIADRDLGVDTDILAQAAVGQQQLTVEQRAEDRIAWLKNYAGIDYMVPDSQNPNARVVNPVLLNITQGAPNVNPRPRQNLNILDHDQWRYLVVGVTALSNANKPSVSSVKVLSDKITQIYSDIRQFAKIANIEVPGAPLPNSASVEQIQTKMQELNDVLEELRESFDGYLANAFANQIQLNFQIQQAQQQQQQQQQGQVTAQEAAAAAAVRALNGNEQIIQLYKDLVKLQRHAGIRKAMEKLAAQEEGDDQSQVSCNDKKQQAVAEDSKAGSSKEGKNKEVELDLSMIVAQVKLYADVVATESFSIYIGGGVGVARTYGDIDGKSVKHIGVVASGVLGVAINVADGVCVDIDGGYMHSFSKIEDKYSVNAFIANAGVRYNF.

An N-terminal signal peptide occupies residues 1–22 (MKKIMLIASAMSALSLPFSASA). A helical transmembrane segment spans residues 67–87 (LTTMLPFGGTLAAGMTIAPGF). Residues 385 to 417 (AQEEGDDQSQVSCNDKKQQAVAEDSKAGSSKEG) form a disordered region. Positions 398 to 417 (NDKKQQAVAEDSKAGSSKEG) are enriched in basic and acidic residues. A helical transmembrane segment spans residues 470–490 (IGVVASGVLGVAINVADGVCV).

It localises to the cell membrane. In terms of biological role, may be an adherent factor for rickettsial adsorption to the host-cell surface and a determinant of virulence of individual rickettsial strain. It is the major outer membrane protein. This Orientia tsutsugamushi (Rickettsia tsutsugamushi) protein is 56 kDa type-specific antigen.